A 112-amino-acid chain; its full sequence is Truncated ankyrin repeat protein B25 (112 aa).

Belongs to the orthopoxviruses B25 protein family.

The protein is Truncated ankyrin repeat protein B25 of Bos taurus (Bovine).